Here is a 138-residue protein sequence, read N- to C-terminus: Venom allergen 2 (138 aa).

The N-terminal stretch at 1–19 is a signal peptide; it reads MKSFVLATCLLGFAQIIYA.

This sequence belongs to the ant venom allergen 2/4 family. As to quaternary structure, homodimer; disulfide-linked. As to expression, expressed by the venom gland.

The protein localises to the secreted. This chain is Venom allergen 2, found in Solenopsis saevissima (Fire ant).